A 368-amino-acid polypeptide reads, in one-letter code: Probable replication factor C subunit 5 (368 aa).

69 to 76 (GPPGTGKT) contacts ATP.

This sequence belongs to the activator 1 small subunits family. As to quaternary structure, heteropentamer of various rfc subunits that forms a complex (RFC) with PCNA in the presence of ATP.

Its subcellular location is the nucleus. Functionally, the elongation of primed DNA templates by DNA polymerase delta and epsilon requires the action of the accessory proteins proliferating cell nuclear antigen (PCNA) and activator 1. The protein is Probable replication factor C subunit 5 of Caenorhabditis elegans.